Consider the following 359-residue polypeptide: MKSIGLNLSGREYKILIGSDLLAETADLLKQAIPCDRVVVITNIDINRLYGKKLKKHLESKGIGSLFLELPEGEIHKSLDMASHIYPQLINHFAERNTPILALGGGVIGDLSGFVAATYQRGVPLVHLPTSLLSQVDSSIGGKVAVNHGGIKNIVGSFYQPRLVISDISCLKTLPEKEFACGMAEIIKSAAIGSSELFKQLETNTPAIKDRSPEIMEDIISQTAAIKAGIVCQDETDRGIRNILNFGHTLGHALESTSSFSQSHGAAVAIGMCFASRLSVKLGLCENETVLRLEKLIADFGLPTRPQDIDPEKIIDAMHHDKKVSDGRIRFILLKRPGEPLIAENILRADVISILEEMK.

NAD(+)-binding positions include 72-77 (EGEIHK), 106-110 (GVIGD), 130-131 (TS), Lys143, Lys152, and 170-173 (CLKT). Positions 185, 248, and 264 each coordinate Zn(2+).

The protein belongs to the sugar phosphate cyclases superfamily. Dehydroquinate synthase family. Co(2+) is required as a cofactor. Requires Zn(2+) as cofactor. It depends on NAD(+) as a cofactor.

It is found in the cytoplasm. It carries out the reaction 7-phospho-2-dehydro-3-deoxy-D-arabino-heptonate = 3-dehydroquinate + phosphate. It participates in metabolic intermediate biosynthesis; chorismate biosynthesis; chorismate from D-erythrose 4-phosphate and phosphoenolpyruvate: step 2/7. Functionally, catalyzes the conversion of 3-deoxy-D-arabino-heptulosonate 7-phosphate (DAHP) to dehydroquinate (DHQ). This Dehalococcoides mccartyi (strain ATCC BAA-2266 / KCTC 15142 / 195) (Dehalococcoides ethenogenes (strain 195)) protein is 3-dehydroquinate synthase.